Here is a 114-residue protein sequence, read N- to C-terminus: Ribonuclease P protein component (114 aa).

The protein belongs to the RnpA family. Consists of a catalytic RNA component (M1 or rnpB) and a protein subunit.

The catalysed reaction is Endonucleolytic cleavage of RNA, removing 5'-extranucleotides from tRNA precursor.. Its function is as follows. RNaseP catalyzes the removal of the 5'-leader sequence from pre-tRNA to produce the mature 5'-terminus. It can also cleave other RNA substrates such as 4.5S RNA. The protein component plays an auxiliary but essential role in vivo by binding to the 5'-leader sequence and broadening the substrate specificity of the ribozyme. The chain is Ribonuclease P protein component from Buchnera aphidicola subsp. Baizongia pistaciae (strain Bp).